Reading from the N-terminus, the 436-residue chain is GTPase Der (436 aa).

2 EngA-type G domains span residues 4 to 167 and 175 to 351; these read PTVA…PVEE and IRFS…ESQN. Residues 10–17, 57–61, 119–122, 181–188, 229–233, and 294–297 each bind GTP; these read GRPNVGKS, DTGGI, NKVD, DTAGM, and NKWD. Residues 352-436 enclose the KH-like domain; that stretch reads KRIPSAVLND…PIHLIARKRK (85 aa).

Belongs to the TRAFAC class TrmE-Era-EngA-EngB-Septin-like GTPase superfamily. EngA (Der) GTPase family. Associates with the 50S ribosomal subunit.

Functionally, GTPase that plays an essential role in the late steps of ribosome biogenesis. The chain is GTPase Der from Streptococcus pyogenes serotype M3 (strain ATCC BAA-595 / MGAS315).